We begin with the raw amino-acid sequence, 221 residues long: Germin-like protein subfamily 1 member 19 (221 aa).

The N-terminal stretch at 1–21 (MKVSMSLILITLSALVTIAKA) is a signal peptide. An intrachain disulfide couples C31 to C48. In terms of domain architecture, Cupin type-1 spans 76 to 213 (SNVTTVNVDQ…AFQLDVNVVK (138 aa)). Residue N77 is glycosylated (N-linked (GlcNAc...) asparagine). Residues H110, H112, E117, and H159 each coordinate Mn(2+).

The protein belongs to the germin family. In terms of assembly, oligomer (believed to be a pentamer but probably hexamer).

The protein localises to the secreted. It is found in the extracellular space. The protein resides in the apoplast. May play a role in plant defense. Probably has no oxalate oxidase activity even if the active site is conserved. This is Germin-like protein subfamily 1 member 19 from Arabidopsis thaliana (Mouse-ear cress).